We begin with the raw amino-acid sequence, 153 residues long: Ribosome maturation factor RimP (153 aa).

This sequence belongs to the RimP family.

The protein resides in the cytoplasm. Required for maturation of 30S ribosomal subunits. This chain is Ribosome maturation factor RimP, found in Desulforamulus reducens (strain ATCC BAA-1160 / DSM 100696 / MI-1) (Desulfotomaculum reducens).